Reading from the N-terminus, the 235-residue chain is Small ribosomal subunit protein uS3 (235 aa).

The KH type-2 domain occupies 39 to 107 (VRKFLNKELA…PAQINIAEVK (69 aa)). The tract at residues 215-235 (AQSEQQPADKPKKAPRGKGRK) is disordered.

It belongs to the universal ribosomal protein uS3 family. Part of the 30S ribosomal subunit. Forms a tight complex with proteins S10 and S14.

Binds the lower part of the 30S subunit head. Binds mRNA in the 70S ribosome, positioning it for translation. This is Small ribosomal subunit protein uS3 from Haemophilus influenzae (strain PittEE).